We begin with the raw amino-acid sequence, 77 residues long: Large ribosomal subunit protein bL28 (77 aa).

Belongs to the bacterial ribosomal protein bL28 family.

This Paracidovorax citrulli (strain AAC00-1) (Acidovorax citrulli) protein is Large ribosomal subunit protein bL28.